Reading from the N-terminus, the 209-residue chain is Glycerol-3-phosphate acyltransferase (209 aa).

Transmembrane regions (helical) follow at residues isoleucine 5 to glycine 25, leucine 50 to alanine 70, tyrosine 74 to glycine 94, isoleucine 115 to leucine 135, and alanine 151 to leucine 171.

It belongs to the PlsY family. As to quaternary structure, probably interacts with PlsX.

Its subcellular location is the cell membrane. The enzyme catalyses an acyl phosphate + sn-glycerol 3-phosphate = a 1-acyl-sn-glycero-3-phosphate + phosphate. Its pathway is lipid metabolism; phospholipid metabolism. In terms of biological role, catalyzes the transfer of an acyl group from acyl-phosphate (acyl-PO(4)) to glycerol-3-phosphate (G3P) to form lysophosphatidic acid (LPA). This enzyme utilizes acyl-phosphate as fatty acyl donor, but not acyl-CoA or acyl-ACP. This Limosilactobacillus reuteri (strain DSM 20016) (Lactobacillus reuteri) protein is Glycerol-3-phosphate acyltransferase.